We begin with the raw amino-acid sequence, 335 residues long: ETS translocation variant 2 (335 aa).

Disordered stretches follow at residues 94-138 (DPWS…SWSH) and 201-220 (GHQS…SDRA). Over residues 205–220 (PAFTTPSKSNKQSDRA) the composition is skewed to polar residues. Residues 234–314 (IQLWQFLLEL…GGRKYTYRFG (81 aa)) constitute a DNA-binding region (ETS).

It belongs to the ETS family. In terms of tissue distribution, testis.

The protein resides in the nucleus. In terms of biological role, binds to DNA sequences containing the consensus pentanucleotide 5'-CGGA[AT]-3'. The protein is ETS translocation variant 2 (Etv2) of Mus musculus (Mouse).